The chain runs to 835 residues: Cap-specific mRNA (nucleoside-2'-O-)-methyltransferase 1 (835 aa).

Positions methionine 1–phenylalanine 67 are disordered. A Bipartite nuclear localization signal motif is present at residues lysine 2 to arginine 19. Serine 28, serine 31, serine 53, serine 66, and serine 91 each carry phosphoserine. Over residues serine 37–aspartate 54 the composition is skewed to polar residues. A compositionally biased stretch (basic and acidic residues) spans threonine 57 to phenylalanine 67. The region spanning tyrosine 87–arginine 133 is the G-patch domain. Residue lysine 108 is modified to N6-acetyllysine. Substrate contacts are provided by residues lysine 203–aspartate 207 and arginine 218. A RrmJ-type SAM-dependent 2'-O-MTase domain is found at phenylalanine 231–lysine 450. S-adenosyl-L-methionine is bound at residue asparagine 234. Lysine 239 is an active-site residue. S-adenosyl-L-methionine-binding positions include cysteine 277–phenylalanine 283 and aspartate 335–isoleucine 336. Aspartate 364 is a catalytic residue. Residue asparagine 374–glutamine 376 participates in substrate binding. Lysine 404 functions as the Proton acceptor in the catalytic mechanism. Position 439 (asparagine 439) interacts with substrate. Residues serine 727 to alanine 835 form an interaction with POLR2A region. Residues arginine 752–aspartate 786 form the WW domain.

As to quaternary structure, interacts with POLR2A (via C-terminus).

The protein resides in the nucleus. It carries out the reaction a 5'-end (N(7)-methyl 5'-triphosphoguanosine)-ribonucleoside in mRNA + S-adenosyl-L-methionine = a 5'-end (N(7)-methyl 5'-triphosphoguanosine)-(2'-O-methyl-ribonucleoside) in mRNA + S-adenosyl-L-homocysteine + H(+). S-adenosyl-L-methionine-dependent methyltransferase that mediates mRNA cap1 2'-O-ribose methylation to the 5'-cap structure of mRNAs. Methylates the ribose of the first nucleotide of a m(7)GpppG-capped mRNA and small nuclear RNA (snRNA) to produce m(7)GpppRm (cap1). Displays a preference for cap0 transcripts. Cap1 modification is linked to higher levels of translation. May be involved in the interferon response pathway. The chain is Cap-specific mRNA (nucleoside-2'-O-)-methyltransferase 1 (CMTR1) from Homo sapiens (Human).